The following is a 55-amino-acid chain: Large ribosomal subunit protein bL33 (55 aa).

This sequence belongs to the bacterial ribosomal protein bL33 family.

The sequence is that of Large ribosomal subunit protein bL33 from Mesorhizobium japonicum (strain LMG 29417 / CECT 9101 / MAFF 303099) (Mesorhizobium loti (strain MAFF 303099)).